A 487-amino-acid polypeptide reads, in one-letter code: Glucose starvation modulator protein 1 (487 aa).

The tract at residues 1–75 (MSIRFPEIPG…KRLTPQEKKA (75 aa)) is disordered. Polar residues predominate over residues 59-68 (SFSSSMTKRL). The segment at residues 83 to 111 (CVFCHSKHLQCSHSRPCQNCIKRNLAHEC) is a DNA-binding region (zn(2)-C6 fungal-type). The span at 122 to 139 (MSTTEVPAVSGESSSESG) shows a compositional bias: polar residues. The segment at 122–158 (MSTTEVPAVSGESSSESGRATGENGSEMGNPPDPQIA) is disordered. A PAS domain is found at 348 to 420 (CLLDYENLSR…FRLFESVAVG (73 aa)).

The protein belongs to the ERT1/acuK family.

The protein resides in the nucleus. Functionally, transcription factor which regulates nonfermentable carbon utilization. This Clavispora lusitaniae (strain ATCC 42720) (Yeast) protein is Glucose starvation modulator protein 1 (GSM1).